A 746-amino-acid polypeptide reads, in one-letter code: UvrABC system protein C (746 aa).

A GIY-YIG domain is found at 18–97 (AKPGVYKWRD…IKEFDPRFNV (80 aa)). One can recognise a UVR domain in the interval 211–246 (RPYIAQLTRDMKEASAELEFEKAARLRDQIQMLETV). Residues 557–577 (ANGNDNGEGGSDISGKGHAVP) are disordered.

This sequence belongs to the UvrC family. Interacts with UvrB in an incision complex.

The protein localises to the cytoplasm. In terms of biological role, the UvrABC repair system catalyzes the recognition and processing of DNA lesions. UvrC both incises the 5' and 3' sides of the lesion. The N-terminal half is responsible for the 3' incision and the C-terminal half is responsible for the 5' incision. This Bifidobacterium longum (strain NCC 2705) protein is UvrABC system protein C.